A 478-amino-acid chain; its full sequence is NAD-dependent malic enzyme (478 aa).

The region spanning 12-86 (TIRLQFEKDI…GVKIVNVSDR (75 aa)) is the ACT domain. The active-site Proton donor is the Tyr114. Lys169 (proton acceptor) is an active-site residue. A divalent metal cation-binding residues include Glu211, Asp212, and Asp237. NAD(+) is bound by residues 270 to 273 (IGAA), Asn363, and Asn393.

Belongs to the malic enzymes family. In terms of assembly, homotetramer. Mg(2+) is required as a cofactor. Requires Mn(2+) as cofactor.

The enzyme catalyses (S)-malate + NAD(+) = pyruvate + CO2 + NADH. The catalysed reaction is oxaloacetate + H(+) = pyruvate + CO2. With respect to regulation, the activity is enhanced 5-7 times by ammonium and potassium. Functionally, in addition to the NAD-dependent oxidative decarboxylation of L-malate, the enzyme catalyzes the decarboxylation of oxaloacetate. The sequence is that of NAD-dependent malic enzyme from Geobacillus stearothermophilus (Bacillus stearothermophilus).